The primary structure comprises 952 residues: Leucine--tRNA ligase (952 aa).

Positions Pro66–His77 match the 'HIGH' region motif. The 'KMSKS' region signature appears at Lys722–Ser726. Lys725 contributes to the ATP binding site.

It belongs to the class-I aminoacyl-tRNA synthetase family.

The protein localises to the cytoplasm. It catalyses the reaction tRNA(Leu) + L-leucine + ATP = L-leucyl-tRNA(Leu) + AMP + diphosphate. The protein is Leucine--tRNA ligase of Corynebacterium glutamicum (strain R).